Reading from the N-terminus, the 279-residue chain is Oxygen-dependent coproporphyrinogen-III oxidase (279 aa).

Ser-102 contacts substrate. A divalent metal cation is bound by residues His-106 and His-116. Catalysis depends on His-116, which acts as the Proton donor. 118-120 lines the substrate pocket; sequence NTR. Residues His-149 and His-179 each contribute to the a divalent metal cation site. Residues 244–279 are important for dimerization; sequence YVEFNLLYDRGTKFGLMTDGNVEAILMSLPPEVKFN.

It belongs to the aerobic coproporphyrinogen-III oxidase family. In terms of assembly, homodimer. The cofactor is a divalent metal cation.

It localises to the cytoplasm. The catalysed reaction is coproporphyrinogen III + O2 + 2 H(+) = protoporphyrinogen IX + 2 CO2 + 2 H2O. It functions in the pathway porphyrin-containing compound metabolism; protoporphyrin-IX biosynthesis; protoporphyrinogen-IX from coproporphyrinogen-III (O2 route): step 1/1. Involved in the heme biosynthesis. Catalyzes the aerobic oxidative decarboxylation of propionate groups of rings A and B of coproporphyrinogen-III to yield the vinyl groups in protoporphyrinogen-IX. This is Oxygen-dependent coproporphyrinogen-III oxidase from Rickettsia peacockii (strain Rustic).